The following is a 347-amino-acid chain: Gamma-glutamyl hydrolase 2 (347 aa).

The N-terminal stretch at 1 to 22 (MWSYVWLPLVALSLFKDSIIMA) is a signal peptide. The 297-residue stretch at 45–341 (APDPNLNYRP…IGYDEVYIFT (297 aa)) folds into the Gamma-glutamyl hydrolase domain. C155 functions as the Nucleophile in the catalytic mechanism. H268 acts as the Proton donor in catalysis.

It belongs to the peptidase C26 family. In terms of tissue distribution, expressed in roots, in leaves, stems and siliques.

It localises to the vacuole. The protein resides in the secreted. Its subcellular location is the extracellular space. It is found in the cell wall. The catalysed reaction is (6S)-5,6,7,8-tetrahydrofolyl-(gamma-L-Glu)(n) + (n-1) H2O = (6S)-5,6,7,8-tetrahydrofolate + (n-1) L-glutamate. Cleaves the polyglutamate sidechains of folate polyglutamates in the vacuole. Is important for polyglutamyl tail length determination before vacuolar exit. Plays a role on folate stability and intracellular folate content. Has endopeptidase activity against 4-amino-10-methylpteroyl penta-, tetra-, tri- and di-gamma-L-glutamate substrates and is responsible for the production of folic acid, also called pteroylglutamic acid (PteGlu) from teroylpolyglutamates. The protein is Gamma-glutamyl hydrolase 2 (GGH2) of Arabidopsis thaliana (Mouse-ear cress).